Here is a 79-residue protein sequence, read N- to C-terminus: Cytochrome c oxidase assembly factor 6 homolog (79 aa).

The CHCH domain occupies Arg9–Phe52. The Cx9C motif motif lies at Cys12–Cys22. 2 cysteine pairs are disulfide-bonded: Cys12-Cys44 and Cys22-Cys33. Positions Cys33–Cys44 match the Cx10C motif motif.

It belongs to the cytochrome c oxidase subunit 6B family. Found in a complex with TMEM177, COX20, MT-CO2/COX2, COX18, SCO1 and SCO2. Interacts with COA1, MT-CO2/COX2, SCO1, SCO2 and COX20. Interacts with COX20 in a MT-CO2/COX2- and COX18-dependent manner. Interacts with COX16.

It is found in the mitochondrion intermembrane space. In terms of biological role, involved in the maturation of the mitochondrial respiratory chain complex IV subunit MT-CO2/COX2. Thereby, may regulate early steps of complex IV assembly. Mitochondrial respiratory chain complex IV or cytochrome c oxidase is the component of the respiratory chain that catalyzes the transfer of electrons from intermembrane space cytochrome c to molecular oxygen in the matrix and as a consequence contributes to the proton gradient involved in mitochondrial ATP synthesis. May also be required for efficient formation of respiratory supercomplexes comprised of complexes III and IV. This Bos taurus (Bovine) protein is Cytochrome c oxidase assembly factor 6 homolog (COA6).